The chain runs to 506 residues: Histidine--tRNA ligase, mitochondrial (506 aa).

The transit peptide at 1–33 (MPLLGLLPRRAWASLLSQLLRPPCASCTGAVRC) directs the protein to the mitochondrion. Residue serine 67 is modified to Phosphoserine. L-histidine-binding positions include 131–133 (DLT), arginine 158, glutamine 174, aspartate 178, arginine 327, and 331–332 (YY). The residue at position 444 (lysine 444) is an N6-acetyllysine.

It belongs to the class-II aminoacyl-tRNA synthetase family. In terms of assembly, homodimer. A high level expression is seen in the heart, kidney and skeletal muscle while a lower level expression is seen in the brain and liver.

It localises to the mitochondrion. It catalyses the reaction tRNA(His) + L-histidine + ATP = L-histidyl-tRNA(His) + AMP + diphosphate + H(+). Its function is as follows. Mitochondrial aminoacyl-tRNA synthetase that catalyzes the ATP-dependent ligation of histidine to the 3'-end of its cognate tRNA, via the formation of an aminoacyl-adenylate intermediate (His-AMP). In Homo sapiens (Human), this protein is Histidine--tRNA ligase, mitochondrial (HARS2).